The primary structure comprises 229 residues: Urease accessory protein UreF (229 aa).

It belongs to the UreF family. As to quaternary structure, ureD, UreF and UreG form a complex that acts as a GTP-hydrolysis-dependent molecular chaperone, activating the urease apoprotein by helping to assemble the nickel containing metallocenter of UreC. The UreE protein probably delivers the nickel.

It localises to the cytoplasm. Functionally, required for maturation of urease via the functional incorporation of the urease nickel metallocenter. In Methylobacterium radiotolerans (strain ATCC 27329 / DSM 1819 / JCM 2831 / NBRC 15690 / NCIMB 10815 / 0-1), this protein is Urease accessory protein UreF.